The sequence spans 275 residues: Formamidopyrimidine-DNA glycosylase (275 aa).

P2 serves as the catalytic Schiff-base intermediate with DNA. Residue E3 is the Proton donor of the active site. K58 functions as the Proton donor; for beta-elimination activity in the catalytic mechanism. H93, R111, and R156 together coordinate DNA. Residues 241-275 (FVYDRAGQPCRVCGTPVRQIVQGQRSTYFCPTCQR) form an FPG-type zinc finger. The active-site Proton donor; for delta-elimination activity is the R265.

It belongs to the FPG family. Monomer. Zn(2+) serves as cofactor.

The enzyme catalyses Hydrolysis of DNA containing ring-opened 7-methylguanine residues, releasing 2,6-diamino-4-hydroxy-5-(N-methyl)formamidopyrimidine.. The catalysed reaction is 2'-deoxyribonucleotide-(2'-deoxyribose 5'-phosphate)-2'-deoxyribonucleotide-DNA = a 3'-end 2'-deoxyribonucleotide-(2,3-dehydro-2,3-deoxyribose 5'-phosphate)-DNA + a 5'-end 5'-phospho-2'-deoxyribonucleoside-DNA + H(+). Involved in base excision repair of DNA damaged by oxidation or by mutagenic agents. Acts as a DNA glycosylase that recognizes and removes damaged bases. Has a preference for oxidized purines, such as 7,8-dihydro-8-oxoguanine (8-oxoG). Has AP (apurinic/apyrimidinic) lyase activity and introduces nicks in the DNA strand. Cleaves the DNA backbone by beta-delta elimination to generate a single-strand break at the site of the removed base with both 3'- and 5'-phosphates. In Burkholderia cenocepacia (strain HI2424), this protein is Formamidopyrimidine-DNA glycosylase.